The sequence spans 150 residues: Catabolic 3-dehydroquinase 1 (150 aa).

Tyr-24 acts as the Proton acceptor in catalysis. Substrate-binding residues include Asn-75, His-81, and Asp-88. His-101 functions as the Proton donor in the catalytic mechanism. Residues 102–103 (VS) and Arg-112 each bind substrate.

It belongs to the type-II 3-dehydroquinase family. As to quaternary structure, homododecamer. Adopts a ring-like structure, composed of an arrangement of two hexameric rings stacked on top of one another.

The catalysed reaction is 3-dehydroquinate = 3-dehydroshikimate + H2O. The protein operates within aromatic compound metabolism; 3,4-dihydroxybenzoate biosynthesis; 3,4-dihydroxybenzoate from 3-dehydroquinate: step 1/2. Functionally, is involved in the catabolism of quinate. Allows the utilization of quinate as carbon source via the beta-ketoadipate pathway. This Aspergillus fumigatus (strain ATCC MYA-4609 / CBS 101355 / FGSC A1100 / Af293) (Neosartorya fumigata) protein is Catabolic 3-dehydroquinase 1.